The primary structure comprises 122 residues: Large ribosomal subunit protein uL14c (122 aa).

The protein belongs to the universal ribosomal protein uL14 family. Part of the 50S ribosomal subunit.

It is found in the plastid. The protein localises to the chloroplast. Functionally, binds to 23S rRNA. The polypeptide is Large ribosomal subunit protein uL14c (Gnetum parvifolium (Small-leaved jointfir)).